The sequence spans 303 residues: Ribonuclease HIII (303 aa).

Positions 85–302 (CSLIGSDEVG…TKKAYQLLKK (218 aa)) constitute an RNase H type-2 domain. Positions 91, 92, and 196 each coordinate a divalent metal cation.

It belongs to the RNase HII family. RnhC subfamily. Mn(2+) is required as a cofactor. Mg(2+) serves as cofactor.

It is found in the cytoplasm. It catalyses the reaction Endonucleolytic cleavage to 5'-phosphomonoester.. Endonuclease that specifically degrades the RNA of RNA-DNA hybrids. In Streptococcus mutans serotype c (strain ATCC 700610 / UA159), this protein is Ribonuclease HIII.